The primary structure comprises 720 residues: Polyribonucleotide nucleotidyltransferase (720 aa).

Mg(2+) contacts are provided by aspartate 487 and aspartate 493. The KH domain occupies 554–613 (PRIETFKIPTDKIREVIGTGGKVIREIVEKTGAKVNIEDDGTVKVASSDGEAMKAAIKWI). The S1 motif domain occupies 623–691 (GQIYDGTVVK…DRGKTRLSMK (69 aa)). The disordered stretch occupies residues 699–720 (EDLEAKDKVAEGEKAPREAAGE). Residues 701-720 (LEAKDKVAEGEKAPREAAGE) show a composition bias toward basic and acidic residues.

The protein belongs to the polyribonucleotide nucleotidyltransferase family. It depends on Mg(2+) as a cofactor.

Its subcellular location is the cytoplasm. The catalysed reaction is RNA(n+1) + phosphate = RNA(n) + a ribonucleoside 5'-diphosphate. In terms of biological role, involved in mRNA degradation. Catalyzes the phosphorolysis of single-stranded polyribonucleotides processively in the 3'- to 5'-direction. This is Polyribonucleotide nucleotidyltransferase from Bradyrhizobium diazoefficiens (strain JCM 10833 / BCRC 13528 / IAM 13628 / NBRC 14792 / USDA 110).